Here is a 229-residue protein sequence, read N- to C-terminus: Movement and silencing protein TGBp1 (229 aa).

The (+)RNA virus helicase ATP-binding domain occupies Met-1 to Lys-114. One can recognise a (+)RNA virus helicase C-terminal domain in the interval Leu-115 to Ala-229.

Belongs to the Tymovirales TGBp1 protein family. As to quaternary structure, homodimer and homooligomer. Interacts with capsid protein. Interacts with host AGO1; this interaction targets the host protein for degradation, thereby suppressing the antiviral RNA silencing.

It is found in the host cytoplasm. In terms of biological role, transports viral genome to neighboring plant cells directly through plasmosdesmata, without any budding. The movement protein allows efficient cell to cell propagation, by bypassing the host cell wall barrier. Increases plasmodesma size exclusion limit. Acts as a suppressor of RNA-mediated gene silencing, also known as post-transcriptional gene silencing (PTGS), a mechanism of plant viral defense that limits the accumulation of viral RNAs. The protein is Movement and silencing protein TGBp1 of Strawberry mild yellow edge-associated virus (SMYEaV).